The primary structure comprises 447 residues: N-succinylarginine dihydrolase (447 aa).

Residues 19–28 (AGLSFGNEAS), N110, and 137–138 (HR) each bind substrate. E174 is a catalytic residue. Residue R212 participates in substrate binding. The active site involves H248. Residues D250 and N359 each contribute to the substrate site. C365 acts as the Nucleophile in catalysis.

The protein belongs to the succinylarginine dihydrolase family. Homodimer.

It catalyses the reaction N(2)-succinyl-L-arginine + 2 H2O + 2 H(+) = N(2)-succinyl-L-ornithine + 2 NH4(+) + CO2. It participates in amino-acid degradation; L-arginine degradation via AST pathway; L-glutamate and succinate from L-arginine: step 2/5. Functionally, catalyzes the hydrolysis of N(2)-succinylarginine into N(2)-succinylornithine, ammonia and CO(2). The protein is N-succinylarginine dihydrolase of Escherichia coli O17:K52:H18 (strain UMN026 / ExPEC).